Here is a 1574-residue protein sequence, read N- to C-terminus: Pentafunctional AROM polypeptide (1574 aa).

The tract at residues 1 to 384 is 3-dehydroquinate synthase; the sequence is MSCSNNTEPT…HEPRATTVED (384 aa). Residues 49–51, 85–88, 116–118, and D121 contribute to the NAD(+) site; these read DTN, EISK, and GGV. R132 is a 7-phospho-2-dehydro-3-deoxy-D-arabino-heptonate binding site. Position 141–142 (141–142) interacts with NAD(+); that stretch reads TT. Positions 148 and 154 each coordinate 7-phospho-2-dehydro-3-deoxy-D-arabino-heptonate. K163 is a binding site for NAD(+). N164 is a 7-phospho-2-dehydro-3-deoxy-D-arabino-heptonate binding site. Residues 181–184 and N192 each bind NAD(+); that span reads FLET. A Zn(2+)-binding site is contributed by E196. Residues 196–199 and K250 each bind 7-phospho-2-dehydro-3-deoxy-D-arabino-heptonate; that span reads EVIK. E260 functions as the Proton acceptor; for 3-dehydroquinate synthase activity in the catalytic mechanism. 7-phospho-2-dehydro-3-deoxy-D-arabino-heptonate contacts are provided by residues 264–268 and H271; that span reads RNLLN. H271 contacts Zn(2+). H275 acts as the Proton acceptor; for 3-dehydroquinate synthase activity in catalysis. H287 and K356 together coordinate 7-phospho-2-dehydro-3-deoxy-D-arabino-heptonate. H287 contributes to the Zn(2+) binding site. Residues 397 to 837 are EPSP synthase; sequence ITPGVSTKLA…WDTLSQSFGL (441 aa). C819 functions as the For EPSP synthase activity in the catalytic mechanism. Residues 858 to 1052 form a shikimate kinase region; that stretch reads TRSVFIVGMR…TAKEQSFFVS (195 aa). 865-872 lines the ATP pocket; sequence GMRGAGKT. The segment at 1053–1266 is 3-dehydroquinase; sequence LTVPSVDSAV…AAPGQLSAAE (214 aa). H1169 functions as the Proton acceptor; for 3-dehydroquinate dehydratase activity in the catalytic mechanism. K1197 serves as the catalytic Schiff-base intermediate with substrate; for 3-dehydroquinate dehydratase activity. The interval 1279–1574 is shikimate dehydrogenase; that stretch reads AQSFHLFGKP…NGDEIPTSTD (296 aa).

In the N-terminal section; belongs to the sugar phosphate cyclases superfamily. Dehydroquinate synthase family. It in the 2nd section; belongs to the EPSP synthase family. This sequence in the 3rd section; belongs to the shikimate kinase family. The protein in the 4th section; belongs to the type-I 3-dehydroquinase family. In the C-terminal section; belongs to the shikimate dehydrogenase family. In terms of assembly, homodimer. Zn(2+) serves as cofactor.

Its subcellular location is the cytoplasm. The enzyme catalyses 7-phospho-2-dehydro-3-deoxy-D-arabino-heptonate = 3-dehydroquinate + phosphate. The catalysed reaction is 3-dehydroquinate = 3-dehydroshikimate + H2O. It carries out the reaction shikimate + NADP(+) = 3-dehydroshikimate + NADPH + H(+). It catalyses the reaction shikimate + ATP = 3-phosphoshikimate + ADP + H(+). The enzyme catalyses 3-phosphoshikimate + phosphoenolpyruvate = 5-O-(1-carboxyvinyl)-3-phosphoshikimate + phosphate. The protein operates within metabolic intermediate biosynthesis; chorismate biosynthesis; chorismate from D-erythrose 4-phosphate and phosphoenolpyruvate: step 2/7. It functions in the pathway metabolic intermediate biosynthesis; chorismate biosynthesis; chorismate from D-erythrose 4-phosphate and phosphoenolpyruvate: step 3/7. Its pathway is metabolic intermediate biosynthesis; chorismate biosynthesis; chorismate from D-erythrose 4-phosphate and phosphoenolpyruvate: step 4/7. It participates in metabolic intermediate biosynthesis; chorismate biosynthesis; chorismate from D-erythrose 4-phosphate and phosphoenolpyruvate: step 5/7. The protein operates within metabolic intermediate biosynthesis; chorismate biosynthesis; chorismate from D-erythrose 4-phosphate and phosphoenolpyruvate: step 6/7. Its function is as follows. The AROM polypeptide catalyzes 5 consecutive enzymatic reactions in prechorismate polyaromatic amino acid biosynthesis. This Verticillium alfalfae (strain VaMs.102 / ATCC MYA-4576 / FGSC 10136) (Verticillium wilt of alfalfa) protein is Pentafunctional AROM polypeptide.